Reading from the N-terminus, the 472-residue chain is Serine/threonine-protein phosphatase T (472 aa).

3 TPR repeats span residues 7–40, 41–73, and 74–107; these read ADKL…TKTP, TLFC…EPTF, and AKAY…APQN. Mn(2+) is bound by residues Asp-217, His-219, Asp-246, and Asn-278. His-279 (proton donor/acceptor) is an active-site residue. Positions 327 and 403 each coordinate Mn(2+).

The protein belongs to the PPP phosphatase family. PP-5 (PP-T) subfamily. The cofactor is Mg(2+). Requires Mn(2+) as cofactor.

It localises to the cytoplasm. The protein localises to the cytosol. It is found in the nucleus. The catalysed reaction is O-phospho-L-seryl-[protein] + H2O = L-seryl-[protein] + phosphate. The enzyme catalyses O-phospho-L-threonyl-[protein] + H2O = L-threonyl-[protein] + phosphate. Activated by arachidonic acid. Its function is as follows. May function as a protein phosphatase. The protein is Serine/threonine-protein phosphatase T of Trypanosoma brucei brucei (strain 927/4 GUTat10.1).